The sequence spans 226 residues: UPF0111 protein PH0637 (226 aa).

It belongs to the UPF0111 family.

The protein is UPF0111 protein PH0637 of Pyrococcus horikoshii (strain ATCC 700860 / DSM 12428 / JCM 9974 / NBRC 100139 / OT-3).